Here is a 408-residue protein sequence, read N- to C-terminus: uncharacterized protein (408 aa).

It belongs to the protein kinase superfamily. ADCK protein kinase family.

This is an uncharacterized protein from Synechocystis sp. (strain ATCC 27184 / PCC 6803 / Kazusa).